The sequence spans 399 residues: Tryptophan synthase beta chain (399 aa).

Lysine 91 carries the N6-(pyridoxal phosphate)lysine modification.

The protein belongs to the TrpB family. Tetramer of two alpha and two beta chains. Requires pyridoxal 5'-phosphate as cofactor.

It catalyses the reaction (1S,2R)-1-C-(indol-3-yl)glycerol 3-phosphate + L-serine = D-glyceraldehyde 3-phosphate + L-tryptophan + H2O. It functions in the pathway amino-acid biosynthesis; L-tryptophan biosynthesis; L-tryptophan from chorismate: step 5/5. In terms of biological role, the beta subunit is responsible for the synthesis of L-tryptophan from indole and L-serine. This is Tryptophan synthase beta chain from Shouchella clausii (strain KSM-K16) (Alkalihalobacillus clausii).